The primary structure comprises 628 residues: DNA mismatch repair protein MutL (628 aa).

Residues 334–367 are disordered; that stretch reads SDFAQPSADNMPKPESPGAPAAHGRKDDAPAAHA. Positions 357 to 367 are enriched in basic and acidic residues; that stretch reads GRKDDAPAAHA.

This sequence belongs to the DNA mismatch repair MutL/HexB family.

In terms of biological role, this protein is involved in the repair of mismatches in DNA. It is required for dam-dependent methyl-directed DNA mismatch repair. May act as a 'molecular matchmaker', a protein that promotes the formation of a stable complex between two or more DNA-binding proteins in an ATP-dependent manner without itself being part of a final effector complex. The protein is DNA mismatch repair protein MutL of Opitutus terrae (strain DSM 11246 / JCM 15787 / PB90-1).